Here is a 365-residue protein sequence, read N- to C-terminus: MPEITVRAKSKTYPVYINEFALEDVREKWTESLAKFSHVFVLTDEHVAELHQAKLDAVLADLPVVTYYVAPNGEEAKTFRVYEDVMTKLIETGLDRKAVLIAFGGGVIGDLGGFVAATYMRGIPFYQVPTTVLAHDSAVGGKVAINHPLGKNMIGNFYQPEAVIYDTQFFATLPEREMRSGFAEMIKHALISDQTLLRALMDTFTEPKDFYTKDLTPFLQRGIEIKANIVAQDETEQGVRAYLNFGHTFGHALEAYGNFGKWLHGEAITYGMIYALTMSETIYGLDFDLAEFKTWLKQLGYDTTFDATVPFNKILENMRHDKKTTFNEISMVLLEEIGEPVIFKAEDDLIFETYKRVMRNGGNGI.

Residues 106–110 (GVIGD), 130–131 (TT), lysine 142, lysine 151, and 169–172 (FFAT) each bind NAD(+). Zn(2+) is bound by residues glutamate 184, histidine 247, and histidine 264.

It belongs to the sugar phosphate cyclases superfamily. Dehydroquinate synthase family. Requires NAD(+) as cofactor. Co(2+) is required as a cofactor. The cofactor is Zn(2+).

Its subcellular location is the cytoplasm. It catalyses the reaction 7-phospho-2-dehydro-3-deoxy-D-arabino-heptonate = 3-dehydroquinate + phosphate. Its pathway is metabolic intermediate biosynthesis; chorismate biosynthesis; chorismate from D-erythrose 4-phosphate and phosphoenolpyruvate: step 2/7. In terms of biological role, catalyzes the conversion of 3-deoxy-D-arabino-heptulosonate 7-phosphate (DAHP) to dehydroquinate (DHQ). The sequence is that of 3-dehydroquinate synthase from Listeria monocytogenes serotype 4b (strain F2365).